Reading from the N-terminus, the 247-residue chain is Adenosylcobinamide-GDP ribazoletransferase (247 aa).

A run of 5 helical transmembrane segments spans residues Ile-34–Val-54, Cys-59–Phe-79, Gly-113–Leu-133, Ile-138–Tyr-158, and Val-194–Ile-214.

This sequence belongs to the CobS family. Requires Mg(2+) as cofactor.

The protein resides in the cell inner membrane. The catalysed reaction is alpha-ribazole + adenosylcob(III)inamide-GDP = adenosylcob(III)alamin + GMP + H(+). It carries out the reaction alpha-ribazole 5'-phosphate + adenosylcob(III)inamide-GDP = adenosylcob(III)alamin 5'-phosphate + GMP + H(+). It functions in the pathway cofactor biosynthesis; adenosylcobalamin biosynthesis; adenosylcobalamin from cob(II)yrinate a,c-diamide: step 7/7. Functionally, joins adenosylcobinamide-GDP and alpha-ribazole to generate adenosylcobalamin (Ado-cobalamin). Also synthesizes adenosylcobalamin 5'-phosphate from adenosylcobinamide-GDP and alpha-ribazole 5'-phosphate. The sequence is that of Adenosylcobinamide-GDP ribazoletransferase from Escherichia coli (strain 55989 / EAEC).